We begin with the raw amino-acid sequence, 178 residues long: ATP synthase subunit delta (178 aa).

The protein belongs to the ATPase delta chain family. As to quaternary structure, F-type ATPases have 2 components, F(1) - the catalytic core - and F(0) - the membrane proton channel. F(1) has five subunits: alpha(3), beta(3), gamma(1), delta(1), epsilon(1). F(0) has three main subunits: a(1), b(2) and c(10-14). The alpha and beta chains form an alternating ring which encloses part of the gamma chain. F(1) is attached to F(0) by a central stalk formed by the gamma and epsilon chains, while a peripheral stalk is formed by the delta and b chains.

The protein localises to the cell inner membrane. Its function is as follows. F(1)F(0) ATP synthase produces ATP from ADP in the presence of a proton or sodium gradient. F-type ATPases consist of two structural domains, F(1) containing the extramembraneous catalytic core and F(0) containing the membrane proton channel, linked together by a central stalk and a peripheral stalk. During catalysis, ATP synthesis in the catalytic domain of F(1) is coupled via a rotary mechanism of the central stalk subunits to proton translocation. In terms of biological role, this protein is part of the stalk that links CF(0) to CF(1). It either transmits conformational changes from CF(0) to CF(1) or is implicated in proton conduction. This chain is ATP synthase subunit delta, found in Nitrosospira multiformis (strain ATCC 25196 / NCIMB 11849 / C 71).